Consider the following 244-residue polypeptide: MNRDTIFSTPIEKLGDFTFDESVADVFPDMIQRSIPGYSNIITAIGMLAERFVTEGSNVYDLGCSRGASILAIRRNAPTKNFRIIGVDNSRPMVERCRSHLSAYHSDIPVNIVCDDIRNIEIQNASMVVLNFTLQFLPRTDRIALLTKIYHGLNPNGILILSEKFSFVDNTIDELLVDLHHTFKRANGYSELEVSQKRTALENVMLTDSIQTHKNRLQDAGFSQIELWFQCFNFGSMVAIKQSP.

S-adenosyl-L-methionine contacts are provided by residues tyrosine 38, 63–65 (GCS), 88–89 (DN), 116–117 (DI), asparagine 131, and arginine 198.

This sequence belongs to the class I-like SAM-binding methyltransferase superfamily. Cx-SAM synthase family. As to quaternary structure, homodimer.

The enzyme catalyses prephenate + S-adenosyl-L-methionine = carboxy-S-adenosyl-L-methionine + 3-phenylpyruvate + H2O. In terms of biological role, catalyzes the conversion of S-adenosyl-L-methionine (SAM) to carboxy-S-adenosyl-L-methionine (Cx-SAM). This chain is Carboxy-S-adenosyl-L-methionine synthase, found in Haemophilus ducreyi (strain 35000HP / ATCC 700724).